The sequence spans 604 residues: Netrin-1 (604 aa).

Positions 1 to 24 are cleaved as a signal peptide; that stretch reads MMRAVWEALAALAAVACLVGAVRG. Positions 47–284 constitute a Laminin N-terminal domain; that stretch reads HPRRCIPDFV…AVSDLQVGGR (238 aa). Asn95, Asn116, and Asn131 each carry an N-linked (GlcNAc...) asparagine glycan. 15 cysteine pairs are disulfide-bonded: Cys119–Cys152, Cys285–Cys294, Cys287–Cys304, Cys306–Cys315, Cys318–Cys338, Cys341–Cys350, Cys343–Cys368, Cys371–Cys380, Cys383–Cys401, Cys404–Cys416, Cys406–Cys423, Cys425–Cys434, Cys437–Cys451, Cys472–Cys544, and Cys491–Cys601. Laminin EGF-like domains are found at residues 285-340, 341-403, and 404-453; these read CKCN…ECVA, CNCN…ACKA, and CDCH…PCIK. N-linked (GlcNAc...) asparagine glycosylation occurs at Asn417. Positions 472 to 601 constitute an NTR domain; it reads CDSYCKASKG…FQQREKKGKC (130 aa). A Cell attachment site motif is present at residues 530 to 532; sequence RGD.

Binds to its receptors; DCC, UNC5A, UNC5B, UNC5C and probably UNC5D. Binds to its receptor; DSCAM. Interacts with APP. In the embryo, widely expressed in the developing nervous system and in mesodermal tissues.

It localises to the secreted. It is found in the cytoplasm. Netrins control guidance of CNS commissural axons and peripheral motor axons. Its association with either DCC or some UNC5 receptors will lead to axon attraction or repulsion, respectively. Binding to UNC5C might cause dissociation of UNC5C from polymerized TUBB3 in microtubules and thereby lead to increased microtubule dynamics and axon repulsion. Involved in dorsal root ganglion axon projection towards the spinal cord. It also serves as a survival factor via its association with its receptors which prevent the initiation of apoptosis. Involved in colorectal tumorigenesis by regulating apoptosis. The chain is Netrin-1 (Ntn1) from Mus musculus (Mouse).